A 252-amino-acid polypeptide reads, in one-letter code: Acetoacetate decarboxylase (252 aa).

The active-site Schiff-base intermediate with acetoacetate is the K116.

It belongs to the ADC family.

It catalyses the reaction acetoacetate + H(+) = acetone + CO2. In terms of biological role, catalyzes the conversion of acetoacetate to acetone and carbon dioxide. This is Acetoacetate decarboxylase from Paraburkholderia xenovorans (strain LB400).